We begin with the raw amino-acid sequence, 226 residues long: Leucyl/phenylalanyl-tRNA--protein transferase (226 aa).

It belongs to the L/F-transferase family.

It is found in the cytoplasm. It carries out the reaction N-terminal L-lysyl-[protein] + L-leucyl-tRNA(Leu) = N-terminal L-leucyl-L-lysyl-[protein] + tRNA(Leu) + H(+). The catalysed reaction is N-terminal L-arginyl-[protein] + L-leucyl-tRNA(Leu) = N-terminal L-leucyl-L-arginyl-[protein] + tRNA(Leu) + H(+). It catalyses the reaction L-phenylalanyl-tRNA(Phe) + an N-terminal L-alpha-aminoacyl-[protein] = an N-terminal L-phenylalanyl-L-alpha-aminoacyl-[protein] + tRNA(Phe). Its function is as follows. Functions in the N-end rule pathway of protein degradation where it conjugates Leu, Phe and, less efficiently, Met from aminoacyl-tRNAs to the N-termini of proteins containing an N-terminal arginine or lysine. The protein is Leucyl/phenylalanyl-tRNA--protein transferase of Bradyrhizobium sp. (strain ORS 278).